The following is a 445-amino-acid chain: MNEEYDVIVLGTGLTECILSGIMSVNGKKVLHMDRNPYYGGESASITPLEDLYKRFKIPGSPPESMGRGRDWNVDLIPKFLMANGQLVKMLLYTEVTRYLDFKVTEGSFVYKGGKIYKVPSTEAEALASSLMGLFEKRRFRKFLVYVANFDEKDPRTFEGIDPKKTTMRDVYKKFDLGQDVIDFTGHALALYRTDDYLDQPCYETINRIKLYSESLARYGKSPYLYPLYGLGELPQGFARLSAIYGGTYMLNKPIEEIIVQNGKVIGVKSEGEIARCKQLICDPSYVKDRVEKVGQVIRVICILSHPIKNTNDANSCQIIIPQNQVNRKSDIYVCMISFAHNVAAQGKYIAIVSTTVETKEPEKEIRPALELLEPIEQKFVSISDLLVPKDLGTESQIFISRTYDATTHFETTCDDIKNIYKRMTGSEFDFEEMKRKKNDIYGED.

Methionine 1 is modified (N-acetylmethionine). An N6-succinyllysine modification is found at lysine 57. Phosphoserine is present on serine 61. Residue lysine 112 is modified to N6-acetyllysine. Serine 130 is subject to Phosphoserine. Position 269 is an N6-acetyllysine (lysine 269). Serine 382 carries the phosphoserine modification.

The protein belongs to the Rab GDI family. Interacts with RHOH. Interacts with the GDP-bound inactive forms of RAB3A, RAB3B, RAB3C, RAB5A, RAB5B, RAB5C, RAB8A, RAB8B, RAB10, RAB12, RAB35, and RAB43; binds RAB3D to a lesser extent. Interacts with DZIP1; this interaction negatively regulates the interaction of GDI2 with GDP-bound RAB8A. As to expression, ubiquitous.

The protein localises to the cytoplasm. It localises to the membrane. Its subcellular location is the golgi apparatus. It is found in the trans-Golgi network. Functionally, GDP-dissociation inhibitor preventing the GDP to GTP exchange of most Rab proteins. By keeping these small GTPases in their inactive GDP-bound form regulates intracellular membrane trafficking. Negatively regulates protein transport to the cilium and ciliogenesis through the inhibition of RAB8A. The chain is Rab GDP dissociation inhibitor beta (GDI2) from Homo sapiens (Human).